The following is a 156-amino-acid chain: MPRRGGIPKRDVLPDPIYGSKIATKLVNQMMLDGKRGVAEKIIYDAFEIIKEKTGKSPLEVFDAAMKNVMPVLEVKARRVGGANYQVPVEVRAERRQTLGIRWMVLFTRKRAGKSMAEKLAAEIMDAANNTGATVKKREDTHKMAEANKAFAHYRW.

The protein belongs to the universal ribosomal protein uS7 family. In terms of assembly, part of the 30S ribosomal subunit. Contacts proteins S9 and S11.

In terms of biological role, one of the primary rRNA binding proteins, it binds directly to 16S rRNA where it nucleates assembly of the head domain of the 30S subunit. Is located at the subunit interface close to the decoding center, probably blocks exit of the E-site tRNA. The chain is Small ribosomal subunit protein uS7 from Desulforamulus reducens (strain ATCC BAA-1160 / DSM 100696 / MI-1) (Desulfotomaculum reducens).